The primary structure comprises 398 residues: S-adenosylmethionine synthase (398 aa).

Positions 1–21 (MAANRRLFTSESVTEGHPDKM) are disordered. His17 serves as a coordination point for ATP. Asp19 contacts Mg(2+). Glu45 contacts K(+). Glu58 and Gln101 together coordinate L-methionine. The segment at 101-111 (QSADIAGGVNQ) is flexible loop. ATP-binding positions include 177–179 (DGK), 244–245 (RF), Asp253, 259–260 (RK), Ala276, and Lys280. Asp253 provides a ligand contact to L-methionine. L-methionine is bound at residue Lys284.

The protein belongs to the AdoMet synthase family. As to quaternary structure, homotetramer; dimer of dimers. It depends on Mg(2+) as a cofactor. K(+) is required as a cofactor.

It localises to the cytoplasm. It catalyses the reaction L-methionine + ATP + H2O = S-adenosyl-L-methionine + phosphate + diphosphate. It participates in amino-acid biosynthesis; S-adenosyl-L-methionine biosynthesis; S-adenosyl-L-methionine from L-methionine: step 1/1. In terms of biological role, catalyzes the formation of S-adenosylmethionine (AdoMet) from methionine and ATP. The overall synthetic reaction is composed of two sequential steps, AdoMet formation and the subsequent tripolyphosphate hydrolysis which occurs prior to release of AdoMet from the enzyme. This chain is S-adenosylmethionine synthase, found in Oceanobacillus iheyensis (strain DSM 14371 / CIP 107618 / JCM 11309 / KCTC 3954 / HTE831).